The sequence spans 541 residues: Cytochrome P450 67 (541 aa).

Residue Cys-479 participates in heme binding.

It belongs to the cytochrome P450 family. Requires heme as cofactor.

The polypeptide is Cytochrome P450 67 (CYP67) (Uromyces fabae (Rust fungus)).